Here is a 235-residue protein sequence, read N- to C-terminus: Probable tetraspanin tspB (235 aa).

Residues 1 to 23 are Cytoplasmic-facing; the sequence is MVDTTNLIPNTPRYLKVPLIAFN. Residues 24–44 form a helical membrane-spanning segment; that stretch reads TILWVLGLVLVIIGSIGVSFF. Residues 45-68 lie on the Extracellular side of the membrane; it reads SNFKDFTKVSKASAALSNLTTGAP. N-linked (GlcNAc...) asparagine glycosylation is present at N62. A helical transmembrane segment spans residues 69–89; sequence AGVLVIGIFFVILTVIGCFVA. Residues 90-93 lie on the Cytoplasmic side of the membrane; the sequence is GKEK. Residues 94–114 form a helical membrane-spanning segment; that stretch reads LVGLVIYTMLMLIILVALIGV. Topologically, residues 115–200 are extracellular; that stretch reads GGKALTLHND…ISSNLYLVGA (86 aa). 2 N-linked (GlcNAc...) asparagine glycosylation sites follow: N143 and N159. A helical transmembrane segment spans residues 201–221; sequence AAVSIGVIEFICMLFALFLII. Residues 222–235 are Cytoplasmic-facing; sequence RICRAPRTKSYDYQ.

Belongs to the tetraspanin (TM4SF) family.

The protein resides in the membrane. The polypeptide is Probable tetraspanin tspB (tspB) (Dictyostelium discoideum (Social amoeba)).